The following is a 341-amino-acid chain: GDP-mannose transporter GONST5 (341 aa).

A run of 8 helical transmembrane segments spans residues 17 to 37, 44 to 64, 89 to 109, 141 to 161, 192 to 212, 233 to 253, 260 to 280, and 284 to 304; these read LSIL…KWIF, FPLS…YIVI, FVFC…PVSF, LVPI…FNVF, INTV…PAFL, IILF…FYVI, TFNV…WMIF, and ISPM…FYGY. Residues 33-152 enclose the EamA domain; the sequence is NKWIFQKLDF…PIVGGILLTS (120 aa).

Belongs to the TPT transporter family. TPT (TC 2.A.7.9) subfamily. As to expression, expressed in rosette leaves, flowers and siliques.

It localises to the golgi apparatus membrane. GDP-mannose transporter that may be involved in the import of GDP-mannose from the cytoplasm into the Golgi lumen. The chain is GDP-mannose transporter GONST5 (GONST5) from Arabidopsis thaliana (Mouse-ear cress).